The primary structure comprises 157 residues: Small ribosomal subunit protein uS7 (157 aa).

It belongs to the universal ribosomal protein uS7 family. As to quaternary structure, part of the 30S ribosomal subunit. Contacts proteins S9 and S11.

One of the primary rRNA binding proteins, it binds directly to 16S rRNA where it nucleates assembly of the head domain of the 30S subunit. Is located at the subunit interface close to the decoding center, probably blocks exit of the E-site tRNA. This is Small ribosomal subunit protein uS7 from Polaromonas sp. (strain JS666 / ATCC BAA-500).